The primary structure comprises 323 residues: Cyclin-H (323 aa).

At serine 5 the chain carries Phosphoserine; by CDK8. At serine 132 the chain carries Phosphoserine. Residues 295-323 are disordered; the sequence is KGYEDDDYVSKKPKQEEEEWTDDDLVDSL. Position 304 is a phosphoserine; by CDK8 (serine 304). Over residues 310–323 the composition is skewed to acidic residues; that stretch reads EEEEWTDDDLVDSL. At threonine 315 the chain carries Phosphothreonine. Serine 322 is subject to Phosphoserine.

Belongs to the cyclin family. Cyclin C subfamily. Associates primarily with CDK7 and MAT1 to form the CAK complex. CAK can further associate with the core-TFIIH to form the TFIIH basal transcription factor. As to expression, expressed in both the germinal and somatic cells of the testis.

It localises to the nucleus. Its function is as follows. Regulates CDK7, the catalytic subunit of the CDK-activating kinase (CAK) enzymatic complex. CAK activates the cyclin-associated kinases CDK1, CDK2, CDK4 and CDK6 by threonine phosphorylation. CAK complexed to the core-TFIIH basal transcription factor activates RNA polymerase II by serine phosphorylation of the repetitive C-terminal domain (CTD) of its large subunit (POLR2A), allowing its escape from the promoter and elongation of the transcripts. Involved in cell cycle control and in RNA transcription by RNA polymerase II. Its expression and activity are constant throughout the cell cycle. The chain is Cyclin-H (Ccnh) from Mus musculus (Mouse).